A 67-amino-acid polypeptide reads, in one-letter code: ATP synthase protein 8 (67 aa).

A helical membrane pass occupies residues 8–24 (TWFTTVLSTTITLFILM). Lys54 carries the post-translational modification N6-acetyllysine; alternate. At Lys54 the chain carries N6-succinyllysine; alternate. An N6-acetyllysine modification is found at Lys57.

Belongs to the ATPase protein 8 family. As to quaternary structure, F-type ATPases have 2 components, CF(1) - the catalytic core - and CF(0) - the membrane proton channel. Component of an ATP synthase complex composed of ATP5PB, ATP5MC1, ATP5F1E, ATP5PD, ATP5ME, ATP5PF, ATP5MF, MT-ATP6, MT-ATP8, ATP5F1A, ATP5F1B, ATP5F1D, ATP5F1C, ATP5PO, ATP5MG, ATP5MK and ATP5MJ. Interacts with PRICKLE3.

Its subcellular location is the mitochondrion membrane. Its function is as follows. Mitochondrial membrane ATP synthase (F(1)F(0) ATP synthase or Complex V) produces ATP from ADP in the presence of a proton gradient across the membrane which is generated by electron transport complexes of the respiratory chain. F-type ATPases consist of two structural domains, F(1) - containing the extramembraneous catalytic core and F(0) - containing the membrane proton channel, linked together by a central stalk and a peripheral stalk. During catalysis, ATP synthesis in the catalytic domain of F(1) is coupled via a rotary mechanism of the central stalk subunits to proton translocation. Part of the complex F(0) domain. Minor subunit located with subunit a in the membrane. In Microtus pennsylvanicus (Meadow vole), this protein is ATP synthase protein 8 (MT-ATP8).